A 103-amino-acid chain; its full sequence is Histone H4 (103 aa).

Residues 1 to 14 (MSGRGKGGKGLGKG) show a composition bias toward gly residues. The tract at residues 1–20 (MSGRGKGGKGLGKGGAKRHR) is disordered. Residues 17–21 (KRHRK) mediate DNA binding.

Belongs to the histone H4 family. As to quaternary structure, the nucleosome is a histone octamer containing two molecules each of H2A, H2B, H3 and H4 assembled in one H3-H4 heterotetramer and two H2A-H2B heterodimers. The octamer wraps approximately 147 bp of DNA.

It is found in the nucleus. The protein localises to the chromosome. Its function is as follows. Core component of nucleosome. Nucleosomes wrap and compact DNA into chromatin, limiting DNA accessibility to the cellular machineries which require DNA as a template. Histones thereby play a central role in transcription regulation, DNA repair, DNA replication and chromosomal stability. DNA accessibility is regulated via a complex set of post-translational modifications of histones, also called histone code, and nucleosome remodeling. This is Histone H4 (H41) from Physarum polycephalum (Slime mold).